A 356-amino-acid polypeptide reads, in one-letter code: Sporulation minus regulator 1 (356 aa).

Residues 183–199 (HPLRQLPGNPWHKFFGN) mediate DNA binding.

This sequence to N.crassa mta-2.

It localises to the nucleus. Transcriptional activator that is required for post-fertilization events. It is required for the developmental events that occur in the female organ after fertilization. This is Sporulation minus regulator 1 (SMR1) from Podospora anserina (Pleurage anserina).